Reading from the N-terminus, the 685-residue chain is Kinesin-like protein KIP2 (685 aa).

2 disordered regions span residues 11 to 46 and 63 to 101; these read EHVG…GPAQ and SRPS…SGAS. Residues 86–101 show a composition bias toward low complexity; sequence GSPQSPDAPSSASGAS. The Kinesin motor domain maps to 113–446; it reads NVSVAIRIKP…VRFASRAKNI (334 aa). Residue 185 to 192 coordinates ATP; the sequence is GMTGSGKT. Coiled coils occupy residues 464–486 and 520–663; these read IIQN…RRSA and LEVE…SALS. The tract at residues 485–510 is disordered; sequence SAAAPSGNGSTSPLDSPGVGGTSLSE.

It belongs to the TRAFAC class myosin-kinesin ATPase superfamily. Kinesin family.

The protein resides in the cytoplasm. The protein localises to the cytoskeleton. Its function is as follows. Required for assembly of the mitotic spindle. The polypeptide is Kinesin-like protein KIP2 (KIP2) (Eremothecium gossypii (strain ATCC 10895 / CBS 109.51 / FGSC 9923 / NRRL Y-1056) (Yeast)).